Consider the following 427-residue polypeptide: Trigger factor (427 aa).

One can recognise a PPIase FKBP-type domain in the interval 163–248 (GDTVVIDFVG…IHEVKAKEVP (86 aa)).

It belongs to the FKBP-type PPIase family. Tig subfamily.

The protein localises to the cytoplasm. The enzyme catalyses [protein]-peptidylproline (omega=180) = [protein]-peptidylproline (omega=0). Its function is as follows. Involved in protein export. Acts as a chaperone by maintaining the newly synthesized protein in an open conformation. Functions as a peptidyl-prolyl cis-trans isomerase. In Streptococcus mutans serotype c (strain ATCC 700610 / UA159), this protein is Trigger factor.